A 301-amino-acid chain; its full sequence is GTPase Era (301 aa).

The 169-residue stretch at 7–175 folds into the Era-type G domain; that stretch reads YCGFIAIVGR…AGIVRKHLPE (169 aa). Residues 15–22 are G1; it reads GRPNVGKS. 15–22 is a GTP binding site; it reads GRPNVGKS. Residues 41–45 form a G2 region; that stretch reads QTTRH. A G3 region spans residues 62-65; it reads DTPG. GTP is bound by residues 62–66 and 124–127; these read DTPGL and NKVD. A G4 region spans residues 124–127; the sequence is NKVD. Residues 154–156 form a G5 region; it reads ISA. Residues 206-283 enclose the KH type-2 domain; sequence LGAELPYSVT…HLELWVKVKS (78 aa).

The protein belongs to the TRAFAC class TrmE-Era-EngA-EngB-Septin-like GTPase superfamily. Era GTPase family. In terms of assembly, monomer.

It localises to the cytoplasm. Its subcellular location is the cell inner membrane. Functionally, an essential GTPase that binds both GDP and GTP, with rapid nucleotide exchange. Plays a role in 16S rRNA processing and 30S ribosomal subunit biogenesis and possibly also in cell cycle regulation and energy metabolism. This chain is GTPase Era, found in Salmonella heidelberg (strain SL476).